We begin with the raw amino-acid sequence, 73 residues long: Homeodomain-only protein (73 aa).

A DNA-binding region (homeobox; degenerate) is located at residues 3-62; sequence TETASGPTEDQVEILEYNFNKVNKHPDPTTLCLIAAEAGLSEEETQKWFKQRLAQWRRSE.

In terms of assembly, interacts with serum response factor (SRF). Component of a large complex containing histone deacetylases such as HDAC2. Interacts with the acetylated forms of HSPA1A and HSPA1B. Interacts with HSPA8.

It localises to the nucleus. Its subcellular location is the cytoplasm. In terms of biological role, atypical homeodomain protein which does not bind DNA and is required to modulate cardiac growth and development. Acts via its interaction with SRF, thereby modulating the expression of SRF-dependent cardiac-specific genes and cardiac development. Prevents SRF-dependent transcription either by inhibiting SRF binding to DNA or by recruiting histone deacetylase (HDAC) proteins that prevent transcription by SRF. Overexpression causes cardiac hypertrophy. Acts as a co-chaperone for HSPA1A and HSPA1B chaperone proteins and assists in chaperone-mediated protein refolding. The protein is Homeodomain-only protein (HOPX) of Bos taurus (Bovine).